Reading from the N-terminus, the 222-residue chain is UPF0758 protein Mpe_A2695 (222 aa).

The region spanning 100–222 (VFDSPQAVKD…VVSFAERGLL (123 aa)) is the MPN domain. Zn(2+) contacts are provided by His-171, His-173, and Asp-184. The short motif at 171 to 184 (HNHPSGVAEPSRAD) is the JAMM motif element.

This sequence belongs to the UPF0758 family.

This is UPF0758 protein Mpe_A2695 from Methylibium petroleiphilum (strain ATCC BAA-1232 / LMG 22953 / PM1).